The sequence spans 208 residues: FAS-associated death domain protein (208 aa).

One can recognise a DED domain in the interval 3-81 (PFLVLLHSVS…RHDLLRRVDD (79 aa)). Positions 97–181 (LCAAFNVICD…LVADLVQEVQ (85 aa)) constitute a Death domain. Arginine 117 is a glycosylation site ((Microbial infection) N-beta-linked (GlcNAc) arginine). The disordered stretch occupies residues 187–208 (QNRSGAMSPMSWNSDASTSEAS). Serine 194 is subject to Phosphoserine.

Can self-associate. Component of the AIM2 PANoptosome complex, a multiprotein complex that drives inflammatory cell death (PANoptosis). Component of the death-induced signaling complex (DISC) composed of cell surface receptor FAS/CD95 or TNFRSF1A, adapter protein FADD and the CASP8 protease; recruitment of CASP8 to the complex is required for processing of CASP8 into the p18 and p10 subunits. Interacts (via death domain) with FAS (via death domain). Interacts directly (via DED domain) with NOL3 (via CARD domain); inhibits death-inducing signaling complex (DISC) assembly by inhibiting the increase in FAS-FADD binding induced by FAS activation. Interacts with CFLAR, PEA15 and MBD4. When phosphorylated, part of a complex containing HIPK3 and FAS. May interact with MAVS/IPS1. Interacts with MOCV v-CFLAR protein and PIDD1. Interacts with RIPK1 and TRADD. Interacts with stimulated TNFRSF10B. Interacts with DDX24. In terms of assembly, (Microbial infection) Interacts with human papillomavirus 16/HPV16 protein E6. As to quaternary structure, (Microbial infection) Interacts with molluscum contagiosum virus proteins MC159L/v-CFLAR and MC160L. Post-translationally, (Microbial infection) Glycosylated at Arg-117 by enteropathogenic E.coli protein NleB1, C.rodentium protein NleB and S.typhimurium protein Ssek1: arginine GlcNAcylation prevents recruitment of caspase-8 or caspase-10 to the activated Fas (CD95) or TNFR-1 receptors. As to expression, expressed in a wide variety of tissues, except for peripheral blood mononuclear leukocytes.

The protein localises to the cytoplasm. Its function is as follows. Apoptotic adapter molecule that recruits caspases CASP8 or CASP10 to the activated FAS/CD95 or TNFRSF1A/TNFR-1 receptors. The resulting aggregate called the death-inducing signaling complex (DISC) performs CASP8 proteolytic activation. Active CASP8 initiates the subsequent cascade of caspases mediating apoptosis. Involved in interferon-mediated antiviral immune response, playing a role in the positive regulation of interferon signaling. This is FAS-associated death domain protein from Homo sapiens (Human).